The chain runs to 430 residues: Probable sulfoacetate transporter SauU (430 aa).

10 helical membrane passes run Leu-47–Trp-67, Leu-83–Val-103, Phe-142–Gly-162, Glu-165–Phe-185, Trp-228–Leu-248, Leu-263–Val-283, Ala-301–Ala-321, Val-327–Leu-347, Met-362–Ile-382, and Leu-390–Asn-410.

Belongs to the major facilitator superfamily.

The protein resides in the cell membrane. Its function is as follows. May transport sulfoacetate into the cell. This Cupriavidus necator (strain ATCC 17699 / DSM 428 / KCTC 22496 / NCIMB 10442 / H16 / Stanier 337) (Ralstonia eutropha) protein is Probable sulfoacetate transporter SauU (sauU).